The primary structure comprises 356 residues: Na(+)/H(+) exchange regulatory cofactor NHE-RF1 (356 aa).

N-acetylserine is present on serine 2. A phosphoserine mark is found at serine 2 and serine 46. The PDZ 1 domain maps to 14 to 94 (LCCLEKGPNG…AVRLLVVDPE (81 aa)). The disordered stretch occupies residues 113 to 142 (AQEKSEHTEPPAAADTKKAGDQNEAEKSHL). The PDZ 2 domain maps to 151-231 (LCTMKKGPNG…EAKLLVVDKE (81 aa)). The tract at residues 265–356 (NSREALVEPA…SKKNELFSNL (92 aa)) is disordered. Phosphoserine occurs at positions 266, 277, 287, and 288. The segment covering 272 to 288 (EPASESPRPALARSASS) has biased composition (low complexity). The residue at position 290 (threonine 290) is a Phosphothreonine. A phosphoserine mark is found at serine 291 and serine 299. Low complexity predominate over residues 307 to 317 (EPSSTSSSSDP). Over residues 346-356 (WSKKNELFSNL) the composition is skewed to basic and acidic residues.

Homodimer, and heterodimer with NHERF2. Binds the N-termini of EZR, RDX and MSN. Binds the C-termini of PDGFRA, PDGFRB, ADRB2, NOS2 and CFTR. Binds ARHGAP17, EPI64, RACK1, OPRK1, GNAQ, CTNNB1 and PLCB3. Binds PDZK1. Interacts with CLCN3. Binds the C-terminus of PAG1. In resting T-cells, part of a PAG1-NHERF1-MSN complex which is disrupted upon TCR activation. Forms a complex with CFTR and SLC4A7. Forms a complex with SLC4A7 and ATP6V1B1. Interacts with TRPC4 (via the PDZ-binding domain). Directly interacts with HTR4. Interacts (via the PDZ 1 domain) with PODXL (via the C-terminal PDZ-binding motif DTHL); interaction is not detected in glomerular epithelium cells. Interacts (via the PDZ 1 domain) with PODXL (via the C-terminal PDZ-binding motif DTHL); the interaction take place early in the secretory pathway and is necessary for its apical membrane sorting. Interacts with SLC26A3. Interacts with MCC. Interacts with SLC34A1. Interacts (via the PDZ domains) with SLC26A6 isoform 4 and isoform 5. Interacts (via PDZ domains) with ACE2 (via PDZ-binding motif); the interaction may enhance ACE2 membrane residence.

Its subcellular location is the cytoplasm. It is found in the apical cell membrane. The protein resides in the cell projection. It localises to the filopodium. The protein localises to the ruffle. Its subcellular location is the microvillus. It is found in the endomembrane system. Scaffold protein that connects plasma membrane proteins with members of the ezrin/moesin/radixin family and thereby helps to link them to the actin cytoskeleton and to regulate their surface expression. Necessary for recycling of internalized ADRB2. Was first known to play a role in the regulation of the activity and subcellular location of SLC9A3. Necessary for cAMP-mediated phosphorylation and inhibition of SLC9A3. Involved in sperm capacitation. May participate in the regulation of the chloride and bicarbonate homeostasis in spermatozoa. May enhance Wnt signaling. May participate in HTR4 targeting to microvilli. Involved in the regulation of phosphate reabsorption in the renal proximal tubules. This Rattus norvegicus (Rat) protein is Na(+)/H(+) exchange regulatory cofactor NHE-RF1 (Nherf1).